We begin with the raw amino-acid sequence, 532 residues long: Purple acid phosphatase 15 (532 aa).

An N-terminal signal peptide occupies residues 1-19 (MTFLLLLLFCFLSPAISSA). N-linked (GlcNAc...) asparagine glycosylation occurs at Asn136. Position 194 (Asp194) interacts with Fe cation. Residue Asn200 is glycosylated (N-linked (GlcNAc...) asparagine). Positions 221 and 224 each coordinate Fe cation. Asp221 is a Zn(2+) binding site. 2 N-linked (GlcNAc...) asparagine glycosylation sites follow: Asn231 and Asn264. Asn277 lines the Zn(2+) pocket. Asn277 serves as a coordination point for substrate. N-linked (GlcNAc...) asparagine glycans are attached at residues Asn286 and Asn301. His359 contacts Zn(2+). His369 (proton donor) is an active-site residue. His396 is a Zn(2+) binding site. 396–398 (HVH) contacts substrate. His398 is a binding site for Fe cation. Asn491 carries N-linked (GlcNAc...) asparagine glycosylation.

Belongs to the metallophosphoesterase superfamily. Purple acid phosphatase family. As to quaternary structure, homodimer. Fe cation is required as a cofactor. The cofactor is Zn(2+). Expressed in roots, stems, cotyledons, leaves, flowers and siliques.

It is found in the secreted. It carries out the reaction 1D-myo-inositol hexakisphosphate + H2O = 1D-myo-inositol 1,2,3,5,6-pentakisphosphate + phosphate. The enzyme catalyses a phosphate monoester + H2O = an alcohol + phosphate. In terms of biological role, acid phosphatase activity with p-nitrophenyl phosphate (pNPP), D-myoinositol 1-phosphate (Ins(1)P1), phytic acid and Myo-inositol hexakisphosphate. Low or no activity with Glc-6-P and ATP. Confers shoot growth stimulation, enhanced salt and osmotic stress tolerance, and ABA insensitivity. May modulate ascorbic acid (AsA) levels by controlling the input of myoinositol into this branch of AsA biosynthesis. The protein is Purple acid phosphatase 15 (PAP15) of Arabidopsis thaliana (Mouse-ear cress).